Reading from the N-terminus, the 645-residue chain is 1-deoxy-D-xylulose-5-phosphate synthase (645 aa).

Thiamine diphosphate-binding positions include histidine 83 and 124-126; that span reads GHS. Aspartate 155 is a binding site for Mg(2+). Thiamine diphosphate-binding positions include 156 to 157, asparagine 184, tyrosine 295, and glutamate 376; that span reads GS. Mg(2+) is bound at residue asparagine 184.

This sequence belongs to the transketolase family. DXPS subfamily. Homodimer. It depends on Mg(2+) as a cofactor. Thiamine diphosphate serves as cofactor.

The catalysed reaction is D-glyceraldehyde 3-phosphate + pyruvate + H(+) = 1-deoxy-D-xylulose 5-phosphate + CO2. It participates in metabolic intermediate biosynthesis; 1-deoxy-D-xylulose 5-phosphate biosynthesis; 1-deoxy-D-xylulose 5-phosphate from D-glyceraldehyde 3-phosphate and pyruvate: step 1/1. Catalyzes the acyloin condensation reaction between C atoms 2 and 3 of pyruvate and glyceraldehyde 3-phosphate to yield 1-deoxy-D-xylulose-5-phosphate (DXP). The chain is 1-deoxy-D-xylulose-5-phosphate synthase from Desulfotalea psychrophila (strain LSv54 / DSM 12343).